Here is a 189-residue protein sequence, read N- to C-terminus: Flavin prenyltransferase UbiX (189 aa).

Residues glycine 10 to serine 12, serine 37, serine 88 to threonine 91, and arginine 123 contribute to the FMN site. Residues tyrosine 153 and arginine 169 each coordinate dimethylallyl phosphate.

Belongs to the UbiX/PAD1 family.

It carries out the reaction dimethylallyl phosphate + FMNH2 = prenylated FMNH2 + phosphate. It participates in cofactor biosynthesis; ubiquinone biosynthesis. Flavin prenyltransferase that catalyzes the synthesis of the prenylated FMN cofactor (prenyl-FMN) for 4-hydroxy-3-polyprenylbenzoic acid decarboxylase UbiD. The prenyltransferase is metal-independent and links a dimethylallyl moiety from dimethylallyl monophosphate (DMAP) to the flavin N5 and C6 atoms of FMN. The sequence is that of Flavin prenyltransferase UbiX from Escherichia coli O157:H7.